Here is a 469-residue protein sequence, read N- to C-terminus: Glutamine synthetase (469 aa).

One can recognise a GS beta-grasp domain in the interval 12-97; the sequence is HDVKWVDLRF…LVCDIIEPST (86 aa). The 365-residue stretch at 105 to 469 folds into the GS catalytic domain; sequence PRNIAKRAEE…PLEYDLYYSV (365 aa). The Mg(2+) site is built by Glu130 and Glu132. Residue Glu208 participates in ATP binding. Mg(2+)-binding residues include Glu213 and Glu221. L-glutamate contacts are provided by residues 265-266 and Gly266; that span reads NG. Residue His270 participates in Mg(2+) binding. ATP is bound by residues 272-274 and Ser274; that span reads HMS. 3 residues coordinate L-glutamate: Arg322, Glu328, and Arg340. ATP-binding residues include Arg340, Arg345, and Lys353. Glu358 is a binding site for Mg(2+). Arg360 is an L-glutamate binding site. Tyr398 carries the O-AMP-tyrosine modification.

The protein belongs to the glutamine synthetase family. Oligomer of 12 subunits arranged in the form of two hexameric ring. Mg(2+) serves as cofactor.

It is found in the cytoplasm. The catalysed reaction is L-glutamate + NH4(+) + ATP = L-glutamine + ADP + phosphate + H(+). Its activity is regulated as follows. The activity of this enzyme could be controlled by adenylation under conditions of abundant glutamine. Catalyzes the ATP-dependent biosynthesis of glutamine from glutamate and ammonia. This chain is Glutamine synthetase, found in Pseudomonas aeruginosa (strain ATCC 15692 / DSM 22644 / CIP 104116 / JCM 14847 / LMG 12228 / 1C / PRS 101 / PAO1).